A 334-amino-acid chain; its full sequence is MKKNQFLKESDVTAESVFFMKRRQVLKALGISAAALSLPHAAHADLLSWFKGNDRPPAPAGKALEFSKPAAWQNNLPLTPADKVSGYNNFYEFGLDKADPAANAGSLKTDPWTLKISGEVAKPLTLDHDDLTRRFPLEERIYRMRCVEAWSMVVPWIGFPLHKLLALAEPTSNAKYVAFETIYAPEQMPGQQDRFIGGGLKYPYVEGLRLDEAMHPLTLMTVGVYGKALPPQNGAPVRLIVPWKYGFKGIKSIVSIKLTRERPPTTWNLAAPDEYGFYANVNPHVDHPRWSQATERFIGSGGILNVQRQPTLLFNGYAEQVASLYRGLDLRENF.

Residues 1 to 44 (MKKNQFLKESDVTAESVFFMKRRQVLKALGISAAALSLPHAAHA) constitute a signal peptide (tat-type signal). Mo-molybdopterin contacts are provided by residues Asn-88, 91–92 (YE), Cys-146, Thr-181, Asn-233, Arg-238, and 249–251 (GIK).

This sequence belongs to the MsrP family. As to quaternary structure, heterodimer of a catalytic subunit (MsrP) and a heme-binding subunit (MsrQ). The cofactor is Mo-molybdopterin. Post-translationally, predicted to be exported by the Tat system. The position of the signal peptide cleavage has not been experimentally proven.

Its subcellular location is the periplasm. It carries out the reaction L-methionyl-[protein] + a quinone + H2O = L-methionyl-(S)-S-oxide-[protein] + a quinol. The catalysed reaction is L-methionyl-[protein] + a quinone + H2O = L-methionyl-(R)-S-oxide-[protein] + a quinol. In terms of biological role, part of the MsrPQ system that repairs oxidized periplasmic proteins containing methionine sulfoxide residues (Met-O), using respiratory chain electrons. Thus protects these proteins from oxidative-stress damage caused by reactive species of oxygen and chlorine generated by the host defense mechanisms. MsrPQ is essential for the maintenance of envelope integrity under bleach stress, rescuing a wide series of structurally unrelated periplasmic proteins from methionine oxidation, including the primary periplasmic chaperone SurA and the lipoprotein Pal. The catalytic subunit MsrP is non-stereospecific, being able to reduce both (R-) and (S-) diastereoisomers of methionine sulfoxide. This is Protein-methionine-sulfoxide reductase catalytic subunit MsrP from Escherichia coli (strain UTI89 / UPEC).